Here is a 278-residue protein sequence, read N- to C-terminus: Putative cysteine-rich repeat secretory protein 19 (278 aa).

Residues 1–32 (MYSSSSVSKRFVLVPIVVVVTTQLLLVRNVSS) form the signal peptide. Gnk2-homologous domains are found at residues 39–147 (YLHH…SLDT) and 160–267 (PSAK…LYPF).

This sequence belongs to the cysteine-rich repeat secretory protein family.

The protein resides in the secreted. This is Putative cysteine-rich repeat secretory protein 19 (CRRSP19) from Arabidopsis thaliana (Mouse-ear cress).